The sequence spans 398 residues: Trans-2-enoyl-CoA reductase [NADH] (398 aa).

NAD(+) is bound by residues 47–52 (GASSGF), 74–75 (YE), 111–112 (DA), and 139–140 (LA). Tyrosine 225 is a binding site for substrate. Tyrosine 235 functions as the Proton donor in the catalytic mechanism. Residues lysine 244 and 274–276 (LVT) each bind NAD(+).

The protein belongs to the TER reductase family. As to quaternary structure, monomer.

It catalyses the reaction a 2,3-saturated acyl-CoA + NAD(+) = a (2E)-enoyl-CoA + NADH + H(+). It functions in the pathway lipid metabolism; fatty acid biosynthesis. Its function is as follows. Involved in the fatty acid synthesis (FAS II). Catalyzes the reduction of the carbon-carbon double bond of crotonyl-CoA to yield butyryl-CoA. This chain is Trans-2-enoyl-CoA reductase [NADH], found in Clostridium acetobutylicum (strain ATCC 824 / DSM 792 / JCM 1419 / IAM 19013 / LMG 5710 / NBRC 13948 / NRRL B-527 / VKM B-1787 / 2291 / W).